We begin with the raw amino-acid sequence, 372 residues long: Methenyltetrahydrofolate synthase domain-containing protein (372 aa).

Residues 246 to 258 (KQAGKDVTLRDEP) show a composition bias toward basic and acidic residues. The segment at 246–289 (KQAGKDVTLRDEPGSQQPAPGPIRRPQDRPQTGSRGGSRSPLQG) is disordered. The region spanning 296–369 (ATVCVGNLPF…NALRVSLGQQ (74 aa)) is the RRM domain.

This Mus musculus (Mouse) protein is Methenyltetrahydrofolate synthase domain-containing protein (Mthfsd).